We begin with the raw amino-acid sequence, 312 residues long: uncharacterized protein (312 aa).

It localises to the mitochondrion. This is an uncharacterized protein from Schizosaccharomyces pombe (strain 972 / ATCC 24843) (Fission yeast).